We begin with the raw amino-acid sequence, 68 residues long: Copper transport protein ATOX1 (68 aa).

Positions 1-63 (MPKHEFSVDM…TLGKTGKAVS (63 aa)) constitute an HMA domain. Cu cation-binding residues include Cys-12 and Cys-15. Phosphoserine is present on Ser-47. An N6-acetyllysine modification is found at Lys-60.

Belongs to the ATX1 family. In terms of assembly, homodimer. Interacts with ATP7B. Interacts with ATP7A. Interacts (via dimer form) with SLC31A1 (via C-terminal domain); this interaction improves ATOX1 stability and controls intracellular Cu(I) levels.

Functionally, binds and deliver cytosolic copper to the copper ATPase proteins. May be important in cellular antioxidant defense. This Bos taurus (Bovine) protein is Copper transport protein ATOX1.